The following is a 250-amino-acid chain: 5-oxoprolinase subunit A (250 aa).

It belongs to the LamB/PxpA family. Forms a complex composed of PxpA, PxpB and PxpC.

It carries out the reaction 5-oxo-L-proline + ATP + 2 H2O = L-glutamate + ADP + phosphate + H(+). Its function is as follows. Catalyzes the cleavage of 5-oxoproline to form L-glutamate coupled to the hydrolysis of ATP to ADP and inorganic phosphate. The sequence is that of 5-oxoprolinase subunit A from Staphylococcus aureus (strain bovine RF122 / ET3-1).